Consider the following 323-residue polypeptide: Chitinase 1 (323 aa).

An N-terminal signal peptide occupies residues 1-20 (MRALAVVVVATAFAVVAVRG). The region spanning 21–61 (EQCGSQAGGALCPNCLCCSQYGWCGSTSAYCGSGCQSQCSG) is the Chitin-binding type-1 domain. 8 cysteine pairs are disulfide-bonded: Cys-23-Cys-38, Cys-32-Cys-44, Cys-35-Cys-63, Cys-37-Cys-51, Cys-55-Cys-59, Cys-100-Cys-162, Cys-176-Cys-184, and Cys-283-Cys-315. Glu-144 acts as the Proton donor in catalysis.

The protein belongs to the glycosyl hydrolase 19 family. Chitinase class I subfamily. In terms of tissue distribution, expressed in roots, leaves, sheaths and meristems.

The catalysed reaction is Random endo-hydrolysis of N-acetyl-beta-D-glucosaminide (1-&gt;4)-beta-linkages in chitin and chitodextrins.. Functionally, hydrolyzes chitin and may play a role in defense against fungal pathogens containing chitin. The protein is Chitinase 1 (Cht1) of Oryza sativa subsp. japonica (Rice).